A 627-amino-acid chain; its full sequence is uncharacterized protein (627 aa).

In terms of domain architecture, WH1 spans 21–136; it reads GISASDKILS…NSVCKRQTRS (116 aa). The segment at 310 to 347 is disordered; sequence RGSLSTPRIPTHRDSYRSATKPDTVPKQTPPPTHNSYV.

This is an uncharacterized protein from Caenorhabditis elegans.